The following is a 302-amino-acid chain: Alpha-N-acetyl-neuraminyl-2,3-beta-galactosyl-1,3-N-acetyl-galactosaminide alpha-2,6-sialyltransferase (302 aa).

The Cytoplasmic segment spans residues 1–6 (MKAPGR). The helical; Signal-anchor for type II membrane protein transmembrane segment at 7 to 27 (LVLIILCSVVFSAVYILLCCW) threads the bilayer. The Lumenal portion of the chain corresponds to 28–302 (AGLPLCLATC…VFAHPSWRTE (275 aa)). Cysteine 76 and cysteine 225 are disulfide-bonded. N-linked (GlcNAc...) asparagine glycosylation occurs at asparagine 135.

This sequence belongs to the glycosyltransferase 29 family. Ubiquitous.

It localises to the golgi apparatus membrane. The enzyme catalyses an alpha-Neu5Ac-(2-&gt;3)-beta-D-Gal-(1-&gt;3)-D-GlcNAc derivative + CMP-N-acetyl-beta-neuraminate = an alpha-Neu5Ac-(2-&gt;3)-beta-D-Gal-(1-&gt;3)-[alpha-Neu5Ac-(2-&gt;6)]-D-GlcNAc derivative + CMP + H(+). The catalysed reaction is N-acetyl-alpha-neuraminosyl-(2-&gt;3)-beta-D-galactosyl-(1-&gt;3)-N-acetyl-D-galactosamine + CMP-N-acetyl-beta-neuraminate = N-acetyl-alpha-neuraminosyl-(2-&gt;3)-beta-D-galactosyl-(1-&gt;3)-[N-acetyl-alpha-neuraminosyl-(2-&gt;6)]-N-acetyl-D-galactosamine + CMP + H(+). It carries out the reaction a ganglioside GM1b (d18:1(4E)) + CMP-N-acetyl-beta-neuraminate = a ganglioside GD1alpha (d18:1(4E)) + CMP + H(+). It catalyses the reaction 3-O-[alpha-Neu5Ac-(2-&gt;3)-beta-D-Gal-(1-&gt;3)-alpha-D-GalNAc]-L-Ser-[protein] + CMP-N-acetyl-beta-neuraminate = a 3-O-{alpha-Neu5Ac-(2-&gt;3)-beta-D-Gal-(1-&gt;3)-[alpha-Neu5Ac-(2-&gt;6)]-alpha-D-GalNAc}-L-seryl-[protein] + CMP + H(+). The enzyme catalyses 3-O-[alpha-Neu5Ac-(2-&gt;3)-beta-D-Gal-(1-&gt;3)-alpha-D-GalNAc]-L-Thr-[protein] + CMP-N-acetyl-beta-neuraminate = a 3-O-{alpha-Neu5Ac-(2-&gt;3)-beta-D-Gal-(1-&gt;3)-[alpha-Neu5Ac-(2-&gt;6)]-alpha-D-GalNAc}-L-threonyl-[protein] + CMP + H(+). The protein operates within protein modification; protein glycosylation. It participates in glycolipid biosynthesis. Functionally, transfers the sialyl group (N-acetyl-alpha-neuraminyl or NeuAc) from CMP-NeuAc to the GalNAc residue on the NeuAc-alpha-2,3-Gal-beta-1,3-GalNAc sequence of glycoproteins and glycolipids forming an alpha-2,6-linkage. Produces branched type disialyl structures by transfer of a sialyl group onto a GalNAc residue inside the backbone core chains. Prefers O-glycans to glycoproteins or glycolipids. This chain is Alpha-N-acetyl-neuraminyl-2,3-beta-galactosyl-1,3-N-acetyl-galactosaminide alpha-2,6-sialyltransferase (ST6GALNAC4), found in Homo sapiens (Human).